A 370-amino-acid polypeptide reads, in one-letter code: Molybdenum import ATP-binding protein ModC (370 aa).

Positions 1–232 (MLDIDVLRQQ…PDIPDFAAQR (232 aa)) constitute an ABC transporter domain. 30 to 37 (GRSGAGKT) serves as a coordination point for ATP. Positions 292–363 (MVSVQNILAA…IKAMSLLRDE (72 aa)) constitute a Mop domain.

Belongs to the ABC transporter superfamily. Molybdate importer (TC 3.A.1.8) family. The complex is composed of two ATP-binding proteins (ModC), two transmembrane proteins (ModB) and a solute-binding protein (ModA).

It localises to the cell inner membrane. It catalyses the reaction molybdate(out) + ATP + H2O = molybdate(in) + ADP + phosphate + H(+). In terms of biological role, part of the ABC transporter complex ModABC involved in molybdenum import. Responsible for energy coupling to the transport system. In Rhodospirillum rubrum (strain ATCC 11170 / ATH 1.1.1 / DSM 467 / LMG 4362 / NCIMB 8255 / S1), this protein is Molybdenum import ATP-binding protein ModC.